Reading from the N-terminus, the 336-residue chain is Holliday junction branch migration complex subunit RuvB (336 aa).

The interval 4-184 (ADRLISAGTT…FGIVQRLEFY (181 aa)) is large ATPase domain (RuvB-L). Residues I23, R24, G65, K68, T69, T70, 131-133 (EDY), R174, Y184, and R221 each bind ATP. T69 contributes to the Mg(2+) binding site. The segment at 185-255 (QVPDLQYIVS…IAAQALDMLN (71 aa)) is small ATPAse domain (RuvB-S). Residues 258–336 (AEGFDYMDRK…HFGITPPEMP (79 aa)) form a head domain (RuvB-H) region. DNA is bound by residues R294, R313, and R318.

The protein belongs to the RuvB family. Homohexamer. Forms an RuvA(8)-RuvB(12)-Holliday junction (HJ) complex. HJ DNA is sandwiched between 2 RuvA tetramers; dsDNA enters through RuvA and exits via RuvB. An RuvB hexamer assembles on each DNA strand where it exits the tetramer. Each RuvB hexamer is contacted by two RuvA subunits (via domain III) on 2 adjacent RuvB subunits; this complex drives branch migration. In the full resolvosome a probable DNA-RuvA(4)-RuvB(12)-RuvC(2) complex forms which resolves the HJ.

It is found in the cytoplasm. The enzyme catalyses ATP + H2O = ADP + phosphate + H(+). Functionally, the RuvA-RuvB-RuvC complex processes Holliday junction (HJ) DNA during genetic recombination and DNA repair, while the RuvA-RuvB complex plays an important role in the rescue of blocked DNA replication forks via replication fork reversal (RFR). RuvA specifically binds to HJ cruciform DNA, conferring on it an open structure. The RuvB hexamer acts as an ATP-dependent pump, pulling dsDNA into and through the RuvAB complex. RuvB forms 2 homohexamers on either side of HJ DNA bound by 1 or 2 RuvA tetramers; 4 subunits per hexamer contact DNA at a time. Coordinated motions by a converter formed by DNA-disengaged RuvB subunits stimulates ATP hydrolysis and nucleotide exchange. Immobilization of the converter enables RuvB to convert the ATP-contained energy into a lever motion, pulling 2 nucleotides of DNA out of the RuvA tetramer per ATP hydrolyzed, thus driving DNA branch migration. The RuvB motors rotate together with the DNA substrate, which together with the progressing nucleotide cycle form the mechanistic basis for DNA recombination by continuous HJ branch migration. Branch migration allows RuvC to scan DNA until it finds its consensus sequence, where it cleaves and resolves cruciform DNA. This chain is Holliday junction branch migration complex subunit RuvB, found in Shigella boydii serotype 18 (strain CDC 3083-94 / BS512).